Reading from the N-terminus, the 122-residue chain is Large ribosomal subunit protein uL14 (122 aa).

This sequence belongs to the universal ribosomal protein uL14 family. Part of the 50S ribosomal subunit. Forms a cluster with proteins L3 and L19. In the 70S ribosome, L14 and L19 interact and together make contacts with the 16S rRNA in bridges B5 and B8.

In terms of biological role, binds to 23S rRNA. Forms part of two intersubunit bridges in the 70S ribosome. The polypeptide is Large ribosomal subunit protein uL14 (Cupriavidus taiwanensis (strain DSM 17343 / BCRC 17206 / CCUG 44338 / CIP 107171 / LMG 19424 / R1) (Ralstonia taiwanensis (strain LMG 19424))).